The primary structure comprises 372 residues: Proton-coupled zinc antiporter SLC30A2 (372 aa).

The Cytoplasmic portion of the chain corresponds to 1-140; that stretch reads MEAKEKQHLL…TMNFGWQRAE (140 aa). A Mitochondrial localization signal motif is present at residues 51–54; that stretch reads HHCH. The Zn(2+) site is built by Cys-53, His-106, and Asp-110. Residues 141 to 161 traverse the membrane as a helical segment; it reads ILGALVSVLSIWVVTGVLVYL. Over 162 to 175 the chain is Lumenal; the sequence is AVERLISGDYEIDG. A helical transmembrane segment spans residues 176 to 196; it reads GTMLITSGCAVAVNIIMGLTL. At 197–220 the chain is on the cytoplasmic side; that stretch reads HQSGHGHSHGTTNQQEENPSVRAA. A helical membrane pass occupies residues 221–241; sequence FIHVIGDFMQSMGVLVAAYIL. Zn(2+)-binding residues include His-223 and Asp-227. At 242-249 the chain is on the lumenal side; sequence YFKPEYKY. The chain crosses the membrane as a helical span at residues 250-270; the sequence is VDPICTFVFSILVLGTTLTIL. The Cytoplasmic portion of the chain corresponds to 271–304; sequence RDVILVLMEGTPKGVDFTAVRDLLLSVEGVEALH. The Lysosomal targeting motif motif lies at 294 to 295; that stretch reads LL. Ser-296 carries the post-translational modification Phosphoserine. Zn(2+) contacts are provided by His-304, His-321, and Glu-355. A helical membrane pass occupies residues 305 to 325; that stretch reads SLHIWALTVAQPVLSVHIAIA. Over 326 to 372 the chain is Lumenal; that stretch reads QNTDAQAVLKTASSRLQGKFHFHTVTIQIEDYSEDMKDCQACQGPSD.

This sequence belongs to the cation diffusion facilitator (CDF) transporter (TC 2.A.4) family. SLC30A subfamily. In terms of assembly, homodimer. Interacts (via lysosomal targeting motif) with AP3D1; in AP-3-mediated transport to lysosomes. Interacts with TMEM163. Post-translationally, phosphorylated at Ser-296. Phosphorylation at Ser-296 prevents localization to lysosomes. Dephosphorylation of Ser-296 which triggers localization to lysosomes, accumulation of zinc into lysosomes and lysosomal-mediated cell death is induced by TNF-alpha.

It localises to the cytoplasmic vesicle. The protein resides in the secretory vesicle membrane. The protein localises to the zymogen granule membrane. It is found in the endosome membrane. Its subcellular location is the lysosome membrane. It localises to the mitochondrion inner membrane. The protein resides in the cell membrane. The catalysed reaction is Zn(2+)(in) + 2 H(+)(out) = Zn(2+)(out) + 2 H(+)(in). Its function is as follows. Electroneutral proton-coupled antiporter concentrating zinc ions into a variety of intracellular organelles including endosomes, zymogen granules and mitochondria. Thereby, plays a crucial role in cellular zinc homeostasis to confer upon cells protection against its potential cytotoxicity. Regulates the zinc concentration of milk, through the transport of zinc ions into secretory vesicles of mammary cells. By concentrating zinc ions into lysosomes participates to lysosomal-mediated cell death during early mammary gland involution. Electroneutral proton-coupled antiporter mediating the efflux of zinc ions through the plasma membrane. This is Proton-coupled zinc antiporter SLC30A2 from Homo sapiens (Human).